A 488-amino-acid chain; its full sequence is ATP synthase subunit beta (488 aa).

164 to 171 is a binding site for ATP; it reads GGAGVGKT.

It belongs to the ATPase alpha/beta chains family. F-type ATPases have 2 components, CF(1) - the catalytic core - and CF(0) - the membrane proton channel. CF(1) has five subunits: alpha(3), beta(3), gamma(1), delta(1), epsilon(1). CF(0) has four main subunits: a(1), b(1), b'(1) and c(9-12).

Its subcellular location is the cellular thylakoid membrane. The catalysed reaction is ATP + H2O + 4 H(+)(in) = ADP + phosphate + 5 H(+)(out). Produces ATP from ADP in the presence of a proton gradient across the membrane. The catalytic sites are hosted primarily by the beta subunits. The protein is ATP synthase subunit beta of Prochlorococcus marinus (strain SARG / CCMP1375 / SS120).